The chain runs to 143 residues: Ribosome-binding factor A (143 aa).

Residues 119-143 (KAKQQQFTPDTPDNSESVDGEKEQD) are disordered. Positions 122-133 (QQQFTPDTPDNS) are enriched in polar residues.

It belongs to the RbfA family. Monomer. Binds 30S ribosomal subunits, but not 50S ribosomal subunits or 70S ribosomes.

It localises to the cytoplasm. One of several proteins that assist in the late maturation steps of the functional core of the 30S ribosomal subunit. Associates with free 30S ribosomal subunits (but not with 30S subunits that are part of 70S ribosomes or polysomes). Required for efficient processing of 16S rRNA. May interact with the 5'-terminal helix region of 16S rRNA. The sequence is that of Ribosome-binding factor A from Shewanella frigidimarina (strain NCIMB 400).